The chain runs to 286 residues: Phosphatidylserine decarboxylase proenzyme (286 aa).

Residues D90, H147, and S253 each act as charge relay system; for autoendoproteolytic cleavage activity in the active site. The Schiff-base intermediate with substrate; via pyruvic acid; for decarboxylase activity role is filled by S253. A Pyruvic acid (Ser); by autocatalysis modification is found at S253.

The protein belongs to the phosphatidylserine decarboxylase family. PSD-B subfamily. Prokaryotic type I sub-subfamily. As to quaternary structure, heterodimer of a large membrane-associated beta subunit and a small pyruvoyl-containing alpha subunit. It depends on pyruvate as a cofactor. In terms of processing, is synthesized initially as an inactive proenzyme. Formation of the active enzyme involves a self-maturation process in which the active site pyruvoyl group is generated from an internal serine residue via an autocatalytic post-translational modification. Two non-identical subunits are generated from the proenzyme in this reaction, and the pyruvate is formed at the N-terminus of the alpha chain, which is derived from the carboxyl end of the proenzyme. The autoendoproteolytic cleavage occurs by a canonical serine protease mechanism, in which the side chain hydroxyl group of the serine supplies its oxygen atom to form the C-terminus of the beta chain, while the remainder of the serine residue undergoes an oxidative deamination to produce ammonia and the pyruvoyl prosthetic group on the alpha chain. During this reaction, the Ser that is part of the protease active site of the proenzyme becomes the pyruvoyl prosthetic group, which constitutes an essential element of the active site of the mature decarboxylase.

Its subcellular location is the cell membrane. The catalysed reaction is a 1,2-diacyl-sn-glycero-3-phospho-L-serine + H(+) = a 1,2-diacyl-sn-glycero-3-phosphoethanolamine + CO2. The protein operates within phospholipid metabolism; phosphatidylethanolamine biosynthesis; phosphatidylethanolamine from CDP-diacylglycerol: step 2/2. In terms of biological role, catalyzes the formation of phosphatidylethanolamine (PtdEtn) from phosphatidylserine (PtdSer). The chain is Phosphatidylserine decarboxylase proenzyme from Pseudoalteromonas atlantica (strain T6c / ATCC BAA-1087).